Reading from the N-terminus, the 427-residue chain is Endothelin-1 receptor (427 aa).

An N-terminal signal peptide occupies residues 1–20 (METFCFRVSFWVALLGCVIS). The Extracellular portion of the chain corresponds to 21 to 80 (DNPESHSTNLSTHVDDFTTFRGTEFSLVVTTHRPTNLALPSNGSMHNYCPQQTKITSAFK). Residues asparagine 29 and asparagine 62 are each glycosylated (N-linked (GlcNAc...) asparagine). A helical transmembrane segment spans residues 81–102 (YINTVISCTIFIVGMVGNATLL). The Cytoplasmic segment spans residues 103–112 (RIIYQNKCMR). Residues 113-132 (NGPNALIASLALGDLIYVVI) form a helical membrane-spanning segment. The Extracellular segment spans residues 133–159 (DLPINVFKLLAGRWPFENHDFGVFLCK). The cysteines at positions 158 and 239 are disulfide-linked. The helical transmembrane segment at 160 to 181 (LFPFLQKSSVGITVLNLCALSV) threads the bilayer. Topologically, residues 182-205 (DRYRAVASWSRVQGIGIPLVTAIE) are cytoplasmic. A helical membrane pass occupies residues 206-229 (IVSIWILSFILAIPEAIGFVMVPF). The Extracellular portion of the chain corresponds to 230–256 (EYKGEEHKTCMLNATSKFMEFYQDVKD). Residues 257-278 (WWLFGFYFCMPLVCTAIFYTLM) traverse the membrane as a helical segment. Residues 279–306 (TCEMLNRRNGSLRIALSEHLKQRREVAK) are Cytoplasmic-facing. A helical membrane pass occupies residues 307-328 (TVFCLVVIFALCWFPLHLSRIL). The Extracellular portion of the chain corresponds to 329-347 (KKTVYDEMDKNRCELLSFL). The chain crosses the membrane as a helical span at residues 348–372 (LLMDYIGINLATMNSCINPIALYFV). Over 373–427 (SKKFKNCFQSCLCCCCYQSKSLMTSVPMNGTSIQWKNHEQNNHNTERSSHKDSIN) the chain is Cytoplasmic. A Phosphoserine modification is found at serine 425.

It belongs to the G-protein coupled receptor 1 family. Endothelin receptor subfamily. EDNRA sub-subfamily. In terms of assembly, interacts with HDAC7 and KAT5.

The protein localises to the cell membrane. Its function is as follows. Receptor for endothelin-1. Mediates its action by association with G proteins that activate a phosphatidylinositol-calcium second messenger system. The rank order of binding affinities for ET-A is: ET1 &gt; ET2 &gt;&gt; ET3. This is Endothelin-1 receptor from Sus scrofa (Pig).